A 252-amino-acid polypeptide reads, in one-letter code: UPF0246 protein FP0718 (252 aa).

This sequence belongs to the UPF0246 family.

This is UPF0246 protein FP0718 from Flavobacterium psychrophilum (strain ATCC 49511 / DSM 21280 / CIP 103535 / JIP02/86).